Reading from the N-terminus, the 1359-residue chain is Transcriptional regulator ATRX homolog (1359 aa).

Positions 1 to 402 are disordered; that stretch reads MRVGVSESED…RAEKERRKRL (402 aa). Residues 11–49 are compositionally biased toward basic and acidic residues; it reads SDGHVIEDEDLEMARQIENERKEKRAQKLKEKREREGKP. Residues 50 to 61 show a composition bias toward basic residues; the sequence is PPKKRPAKKRKA. Residues 64 to 73 are compositionally biased toward acidic residues; it reads SEEDDDDEEE. Composition is skewed to basic residues over residues 77-86, 103-123, 139-149, 165-177, 194-204, and 219-229; these read KSSKKSRKRA, KSKS…KKRT, KSKKKSKKTKK, VKKS…KSVK, KKSKKGLKKKA, and KKSKKKSKKVV. Residues 257-271 show a composition bias toward acidic residues; sequence ESSESEKSDEEEEEK. Over residues 321 to 336 the composition is skewed to basic and acidic residues; sequence KDQKSESEASDVEEKV. Over residues 347–357 the composition is skewed to low complexity; it reads SESGSDSSEGS. Residues 362-376 show a composition bias toward basic residues; sequence RKSKKKEKPEKKKKG. Residues 383–397 are compositionally biased toward basic and acidic residues; sequence KLQKETIDAERAEKE. One can recognise a Helicase ATP-binding domain in the interval 483–685; the sequence is DRLDTEGSGG…HCMVNFVKPG (203 aa). 496-503 is a binding site for ATP; sequence HCMGLGKT. Residues 636–639 carry the DEAH box motif; the sequence is DEAH. Positions 809–891 are disordered; the sequence is RVMREDAEEE…NSDDEDEEDG (83 aa). Positions 814–832 are enriched in acidic residues; sequence DAEEEADFIDDGDGSESES. The span at 833 to 847 shows a compositional bias: low complexity; it reads EGSFKSGSESDSGKS. Positions 951 to 1134 constitute a Helicase C-terminal domain; it reads LLVEIIKKCE…EAQIQRHYLG (184 aa).

Belongs to the SNF2/RAD54 helicase family.

The protein localises to the nucleus. It carries out the reaction ATP + H2O = ADP + phosphate + H(+). In terms of biological role, required for embryonic development and gonadogenesis. Also, functions redundantly with the transcriptional repressor lin-35 to regulate somatic gonad development. This chain is Transcriptional regulator ATRX homolog, found in Caenorhabditis elegans.